Here is a 658-residue protein sequence, read N- to C-terminus: Glycogen debranching enzyme (658 aa).

Asp-336 acts as the Nucleophile in catalysis. Glu-371 serves as the catalytic Proton donor. The interval Glu-459 to Leu-486 is disordered.

Belongs to the glycosyl hydrolase 13 family.

The catalysed reaction is Hydrolysis of (1-&gt;6)-alpha-D-glucosidic linkages to branches with degrees of polymerization of three or four glucose residues in limit dextrin.. It participates in glycan degradation; glycogen degradation. Removes maltotriose and maltotetraose chains that are attached by 1,6-alpha-linkage to the limit dextrin main chain, generating a debranched limit dextrin. The sequence is that of Glycogen debranching enzyme from Salmonella gallinarum (strain 287/91 / NCTC 13346).